A 1592-amino-acid polypeptide reads, in one-letter code: Probable serine/threonine-protein kinase DDB_G0293958 (1592 aa).

Residues 1-302 (MTGFEIFKKK…CLNYLKEKLI (302 aa)) enclose the Protein kinase 1 domain. Residues 2–10 (TGFEIFKKK) and Lys43 contribute to the ATP site. Catalysis depends on Asp158, which acts as the Proton acceptor. Disordered stretches follow at residues 348–402 (INNN…NNNN), 455–526 (FNDI…SNYN), and 837–867 (KNNNNFYNNNNNNNNNNNNNNNNNNNSNDKS). The segment covering 349 to 402 (NNNNNNNNNNNNNNNNNNNNNNNNNNNNNNNNNNNNNNNNNNNNNNNNNNNNNN) has biased composition (low complexity). Residues 461-518 (STTGEEEEEEKKDNLKRQNENNQIEQEDKGEKHLKETLNNNNNNNNNNNNNNNNNNNN) are a coiled coil. Positions 486–496 (QEDKGEKHLKE) are enriched in basic and acidic residues. Composition is skewed to low complexity over residues 499-526 (NNNNNNNNNNNNNNNNNNNNNNNNSNYN) and 837-864 (KNNNNFYNNNNNNNNNNNNNNNNNNNSN). Residues 1342–1592 (LGTYNLIGDS…KELIECLNKL (251 aa)) enclose the Protein kinase 2 domain. ATP contacts are provided by residues 1348–1356 (IGDSVFRNI) and Lys1376. Asp1474 acts as the Proton acceptor in catalysis.

Belongs to the protein kinase superfamily. Ser/Thr protein kinase family.

The catalysed reaction is L-seryl-[protein] + ATP = O-phospho-L-seryl-[protein] + ADP + H(+). The enzyme catalyses L-threonyl-[protein] + ATP = O-phospho-L-threonyl-[protein] + ADP + H(+). The polypeptide is Probable serine/threonine-protein kinase DDB_G0293958 (Dictyostelium discoideum (Social amoeba)).